Reading from the N-terminus, the 135-residue chain is Rheacalcin-1 (135 aa).

3 cysteine pairs are disulfide-bonded: Cys6-Cys17, Cys34-Cys131, and Cys106-Cys123. The C-type lectin domain occupies 13-132 (FRGNCYGYFR…CSERNAFICK (120 aa)).

The protein resides in the secreted. The protein localises to the extracellular space. Its subcellular location is the extracellular matrix. In Rhea americana (Greater rhea), this protein is Rheacalcin-1.